Here is a 356-residue protein sequence, read N- to C-terminus: Phosphatidylglycerol--prolipoprotein diacylglyceryl transferase (356 aa).

4 helical membrane-spanning segments follow: residues isoleucine 24–valine 44, tryptophan 59–isoleucine 79, leucine 103–valine 123, and valine 144–glycine 164. Residue arginine 165 participates in a 1,2-diacyl-sn-glycero-3-phospho-(1'-sn-glycerol) binding. The next 2 helical transmembrane spans lie at proline 209 to glycine 229 and phenylalanine 265 to cysteine 285.

This sequence belongs to the Lgt family.

It localises to the cell membrane. The enzyme catalyses L-cysteinyl-[prolipoprotein] + a 1,2-diacyl-sn-glycero-3-phospho-(1'-sn-glycerol) = an S-1,2-diacyl-sn-glyceryl-L-cysteinyl-[prolipoprotein] + sn-glycerol 1-phosphate + H(+). The protein operates within protein modification; lipoprotein biosynthesis (diacylglyceryl transfer). Its function is as follows. Catalyzes the transfer of the diacylglyceryl group from phosphatidylglycerol to the sulfhydryl group of the N-terminal cysteine of a prolipoprotein, the first step in the formation of mature lipoproteins. The protein is Phosphatidylglycerol--prolipoprotein diacylglyceryl transferase of Malacoplasma penetrans (strain HF-2) (Mycoplasma penetrans).